An 816-amino-acid chain; its full sequence is uncharacterized protein (816 aa).

4 disordered regions span residues 1–34 (MLFN…QQES), 65–101 (RQNN…GYKN), 154–406 (DEKD…ENPE), and 770–816 (RQHK…VMYA). Low complexity predominate over residues 18–32 (NQSSANTQNQQAHQQ). Residues 83 to 92 (VSATSAYSKQ) are compositionally biased toward polar residues. Over residues 161–223 (TTTSSSTSTS…STSTTSTSTT (63 aa)) the composition is skewed to low complexity. Residues 246–260 (ESTSIGKGTADSAQI) show a composition bias toward polar residues. Ser-286 carries the post-translational modification Phosphoserine. Residues 292-316 (DEQKEEKSDVKKVNPPSGEEKKEVE) are compositionally biased toward basic and acidic residues. The span at 317–326 (AEGDAEEETE) shows a compositional bias: acidic residues. Low complexity predominate over residues 327-342 (QSSAEESAERTSTPET). 2 positions are modified to phosphoserine: Ser-343 and Ser-347. Residues 343–353 (SEPESEEDESP) show a composition bias toward acidic residues. The span at 380 to 396 (KSPTSSSTQKSKTAAPS) shows a compositional bias: low complexity. Basic and acidic residues-rich tracts occupy residues 770–792 (RQHK…DRSQ) and 799–816 (PKDD…VMYA). At Thr-809 the chain carries Phosphothreonine.

Post-translationally, pyrophosphorylated by 5-diphosphoinositol pentakisphosphate (5-IP7). Serine pyrophosphorylation is achieved by Mg(2+)-dependent, but enzyme independent transfer of a beta-phosphate from a inositol pyrophosphate to a pre-phosphorylated serine residue.

This is an uncharacterized protein from Saccharomyces cerevisiae (strain ATCC 204508 / S288c) (Baker's yeast).